Reading from the N-terminus, the 88-residue chain is Small ribosomal subunit protein bS16c (88 aa).

Belongs to the bacterial ribosomal protein bS16 family.

The protein localises to the plastid. The protein resides in the chloroplast. In Citrus sinensis (Sweet orange), this protein is Small ribosomal subunit protein bS16c.